Consider the following 312-residue polypeptide: Calcium-independent mitochondrial carrier protein SCaMC-3L (312 aa).

Solcar repeat units lie at residues 27–113 (GTLW…SRNF), 121–206 (PSFQ…LRCL), and 217–304 (PSGL…MKKT). 6 helical membrane passes run 33-50 (LLSGAMAGAVSRTGTAPL), 88-107 (GNGINVLKIAPEYAIKFSVF), 131-144 (SLAVAISQTLINPM), 182-200 (YLPNMLGIIPYACTDLAVY), 219-243 (GLVSLSSVTLSTTCGQMASYPLTLV), and 279-298 (GMTPTLLKVLPAGGISYLVY).

It belongs to the mitochondrial carrier (TC 2.A.29) family. As to expression, mainly expressed in testis and at lesser levels in brain.

The protein resides in the mitochondrion inner membrane. It catalyses the reaction Mg(2+)(out) + phosphate(in) + ATP(out) = Mg(2+)(in) + phosphate(out) + ATP(in). The enzyme catalyses ADP(out) + phosphate(in) + H(+)(out) = ADP(in) + phosphate(out) + H(+)(in). Calcium-independent ATP-Mg/Pi exchanger that catalyzes the electroneutral exchange of Mg-ATP or free ADP against an hydrogenphosphate and participates in the net transport of adenine nucleotides across the mitochondria inner membrane. The protein is Calcium-independent mitochondrial carrier protein SCaMC-3L of Rattus norvegicus (Rat).